The following is a 669-amino-acid chain: DNA ligase (669 aa).

NAD(+)-binding positions include 34–38 (DAEYD), 83–84 (SL), and glutamate 114. Lysine 116 serves as the catalytic N6-AMP-lysine intermediate. The NAD(+) site is built by arginine 137, glutamate 171, lysine 287, and lysine 311. Positions 405, 408, 423, and 428 each coordinate Zn(2+). One can recognise a BRCT domain in the interval 591–669 (NVESYFAGKT…EERFLQELNK (79 aa)).

The protein belongs to the NAD-dependent DNA ligase family. LigA subfamily. It depends on Mg(2+) as a cofactor. Mn(2+) is required as a cofactor.

It catalyses the reaction NAD(+) + (deoxyribonucleotide)n-3'-hydroxyl + 5'-phospho-(deoxyribonucleotide)m = (deoxyribonucleotide)n+m + AMP + beta-nicotinamide D-nucleotide.. Its function is as follows. DNA ligase that catalyzes the formation of phosphodiester linkages between 5'-phosphoryl and 3'-hydroxyl groups in double-stranded DNA using NAD as a coenzyme and as the energy source for the reaction. It is essential for DNA replication and repair of damaged DNA. The sequence is that of DNA ligase from Bacillus cereus (strain AH187).